The sequence spans 410 residues: CinA-like protein (410 aa).

Belongs to the CinA family.

The sequence is that of CinA-like protein from Anaeromyxobacter sp. (strain Fw109-5).